A 235-amino-acid chain; its full sequence is Claudin-16 (235 aa).

Residues 1 to 3 (MKD) lie on the Cytoplasmic side of the membrane. Residues 4–24 (LLQYAACFLAIFSTGFLIVAT) form a helical membrane-spanning segment. At 25–79 (WTDCWMVNADDSLEVSTKCRGLWWECVTNAFDGIRTCDEYDSIYAEHPLKLVVTR) the chain is on the extracellular side. The helical transmembrane segment at 80-100 (ALMITADILAGFGFITLLLGL) threads the bilayer. Residues 101-115 (DCVKFLPDDPQIKVR) lie on the Cytoplasmic side of the membrane. Residues 116–136 (LCFVAGTTLLIAGTPGIIGSV) form a helical membrane-spanning segment. The Extracellular portion of the chain corresponds to 137–169 (WYAVDVYVERSSLVLHNIFLGIQYKFGWSCWLG). The chain crosses the membrane as a helical span at residues 170–190 (MAGSLGCFLAGALLTCCLYLF). Over 191–235 (KDVGPERNYPYAMRKPYSTAGVSMAKSYKAPRTETAKMYAVDTRV) the chain is Cytoplasmic. The Interaction with TJP1 signature appears at 233 to 235 (TRV).

This sequence belongs to the claudin family. As to quaternary structure, can form heteropolymeric tight junction strands with other claudins. Interacts with CLDN19. Cannot form tight junction strands on its own. Interacts (via PDZ-binding motif TRV) with TJP1 (via PDZ domain). Expressed in the corticomedullary axis of the TAL, specifically in the cortex and the outer stripe of outer medulla (OSOM) zone (at protein level).

It localises to the cell junction. It is found in the tight junction. Its subcellular location is the cell membrane. The catalysed reaction is Mg(2+)(in) = Mg(2+)(out). It carries out the reaction Ca(2+)(in) = Ca(2+)(out). The enzyme catalyses Na(+)(in) = Na(+)(out). It catalyses the reaction K(+)(in) = K(+)(out). The catalysed reaction is Rb(+)(in) = Rb(+)(out). It carries out the reaction Cs(+)(in) = Cs(+)(out). The enzyme catalyses Li(+)(in) = Li(+)(out). Forms paracellular channels: coassembles with CLDN19 into tight junction strands with cation-selective channels through the strands, conveying epithelial permeability in a process known as paracellular tight junction permeability. Involved in the maintenance of ion gradients along the nephron. In the thick ascending limb (TAL) of Henle's loop, facilitates sodium paracellular permeability from the interstitial compartment to the lumen, contributing to the lumen-positive transepithelial potential that drives paracellular magnesium and calcium reabsorption. The polypeptide is Claudin-16 (Mus musculus (Mouse)).